Here is a 524-residue protein sequence, read N- to C-terminus: Germ cell-less protein-like 1 (524 aa).

The disordered stretch occupies residues 1–37 (MGALSSRVLRPAGRTEQPEPTPGAGGAARRSDAGEDA). The short motif at 47–53 (GRKRKRS) is the Nuclear localization signal element. The interval 63-83 (DSETDDDEDEGDEQQRLLNTP) is disordered. Position 64 is a phosphoserine (S64). The span at 65–74 (ETDDDEDEGD) shows a compositional bias: acidic residues. Position 66 is a phosphothreonine (T66). The short motif at 83–89 (PRRKKLK) is the Nuclear localization signal element. The BTB domain occupies 106–176 (SDIKICALGE…LYRDDVLIKP (71 aa)).

As to quaternary structure, interacts with TMPO-Beta, TSG101 and TFDP2. Interacts with EMD. Ubiquitously expressed at low levels throughout development and in adult tissues.

It localises to the nucleus matrix. Its function is as follows. Possible function in spermatogenesis. Enhances the degradation of MDM2 and increases the amount of p53 probably by modulating the nucleocytoplasmic transport. In Mus musculus (Mouse), this protein is Germ cell-less protein-like 1 (Gmcl1).